A 131-amino-acid polypeptide reads, in one-letter code: D-ribose pyranase (131 aa).

His20 functions as the Proton donor in the catalytic mechanism. Residues Asp28, His98, and Tyr120–Asn122 contribute to the substrate site.

The protein belongs to the RbsD / FucU family. RbsD subfamily. Homodecamer.

The protein localises to the cytoplasm. The catalysed reaction is beta-D-ribopyranose = beta-D-ribofuranose. It participates in carbohydrate metabolism; D-ribose degradation; D-ribose 5-phosphate from beta-D-ribopyranose: step 1/2. Its function is as follows. Catalyzes the interconversion of beta-pyran and beta-furan forms of D-ribose. The chain is D-ribose pyranase from Enterococcus faecalis (strain ATCC 700802 / V583).